The primary structure comprises 95 residues: Aspartyl/glutamyl-tRNA(Asn/Gln) amidotransferase subunit C (95 aa).

The protein belongs to the GatC family. In terms of assembly, heterotrimer of A, B and C subunits.

It catalyses the reaction L-glutamyl-tRNA(Gln) + L-glutamine + ATP + H2O = L-glutaminyl-tRNA(Gln) + L-glutamate + ADP + phosphate + H(+). The enzyme catalyses L-aspartyl-tRNA(Asn) + L-glutamine + ATP + H2O = L-asparaginyl-tRNA(Asn) + L-glutamate + ADP + phosphate + 2 H(+). Functionally, allows the formation of correctly charged Asn-tRNA(Asn) or Gln-tRNA(Gln) through the transamidation of misacylated Asp-tRNA(Asn) or Glu-tRNA(Gln) in organisms which lack either or both of asparaginyl-tRNA or glutaminyl-tRNA synthetases. The reaction takes place in the presence of glutamine and ATP through an activated phospho-Asp-tRNA(Asn) or phospho-Glu-tRNA(Gln). The sequence is that of Aspartyl/glutamyl-tRNA(Asn/Gln) amidotransferase subunit C from Cytophaga hutchinsonii (strain ATCC 33406 / DSM 1761 / CIP 103989 / NBRC 15051 / NCIMB 9469 / D465).